Reading from the N-terminus, the 101-residue chain is Small ribosomal subunit protein uS14 (101 aa).

This sequence belongs to the universal ribosomal protein uS14 family. Part of the 30S ribosomal subunit. Contacts proteins S3 and S10.

Its function is as follows. Binds 16S rRNA, required for the assembly of 30S particles and may also be responsible for determining the conformation of the 16S rRNA at the A site. This chain is Small ribosomal subunit protein uS14, found in Idiomarina loihiensis (strain ATCC BAA-735 / DSM 15497 / L2-TR).